Consider the following 199-residue polypeptide: Thymidylate kinase (199 aa).

7-14 provides a ligand contact to ATP; the sequence is GIDGSGKT.

The protein belongs to the thymidylate kinase family.

The enzyme catalyses dTMP + ATP = dTDP + ADP. Its function is as follows. Phosphorylation of dTMP to form dTDP in both de novo and salvage pathways of dTTP synthesis. The chain is Thymidylate kinase from Tropheryma whipplei (strain Twist) (Whipple's bacillus).